The sequence spans 432 residues: Enolase (432 aa).

Gln-164 lines the (2R)-2-phosphoglycerate pocket. The active-site Proton donor is Glu-206. Mg(2+) is bound by residues Asp-243, Glu-289, and Asp-316. The (2R)-2-phosphoglycerate site is built by Lys-341, Arg-370, Ser-371, and Lys-392. The active-site Proton acceptor is Lys-341.

This sequence belongs to the enolase family. It depends on Mg(2+) as a cofactor.

Its subcellular location is the cytoplasm. It is found in the secreted. The protein resides in the cell surface. It carries out the reaction (2R)-2-phosphoglycerate = phosphoenolpyruvate + H2O. Its pathway is carbohydrate degradation; glycolysis; pyruvate from D-glyceraldehyde 3-phosphate: step 4/5. Catalyzes the reversible conversion of 2-phosphoglycerate (2-PG) into phosphoenolpyruvate (PEP). It is essential for the degradation of carbohydrates via glycolysis. In Borrelia duttonii (strain Ly), this protein is Enolase.